The chain runs to 279 residues: Sulfur carrier protein FdhD (279 aa).

Residue C122 is the Cysteine persulfide intermediate of the active site.

The protein belongs to the FdhD family.

The protein resides in the cytoplasm. Functionally, required for formate dehydrogenase (FDH) activity. Acts as a sulfur carrier protein that transfers sulfur from IscS to the molybdenum cofactor prior to its insertion into FDH. The polypeptide is Sulfur carrier protein FdhD (Thermoplasma volcanium (strain ATCC 51530 / DSM 4299 / JCM 9571 / NBRC 15438 / GSS1)).